The sequence spans 306 residues: Acetyl-coenzyme A carboxylase carboxyl transferase subunit beta (306 aa).

Positions 25–294 (LWIKDPTSGE…VVNPSNTSST (270 aa)) constitute a CoA carboxyltransferase N-terminal domain. The segment covering 287 to 296 (NPSNTSSTNS) has biased composition (low complexity). Positions 287–306 (NPSNTSSTNSQASLSKAEAA) are disordered.

This sequence belongs to the AccD/PCCB family. Acetyl-CoA carboxylase is a heterohexamer composed of biotin carboxyl carrier protein (AccB), biotin carboxylase (AccC) and two subunits each of ACCase subunit alpha (AccA) and ACCase subunit beta (AccD).

The protein resides in the cytoplasm. The enzyme catalyses N(6)-carboxybiotinyl-L-lysyl-[protein] + acetyl-CoA = N(6)-biotinyl-L-lysyl-[protein] + malonyl-CoA. It functions in the pathway lipid metabolism; malonyl-CoA biosynthesis; malonyl-CoA from acetyl-CoA: step 1/1. Its function is as follows. Component of the acetyl coenzyme A carboxylase (ACC) complex. Biotin carboxylase (BC) catalyzes the carboxylation of biotin on its carrier protein (BCCP) and then the CO(2) group is transferred by the transcarboxylase to acetyl-CoA to form malonyl-CoA. The protein is Acetyl-coenzyme A carboxylase carboxyl transferase subunit beta of Bartonella henselae (strain ATCC 49882 / DSM 28221 / CCUG 30454 / Houston 1) (Rochalimaea henselae).